The sequence spans 20 residues: Large ribosomal subunit protein bL33 (20 aa).

It belongs to the bacterial ribosomal protein bL33 family.

This chain is Large ribosomal subunit protein bL33 (rpmG), found in Brevundimonas vesicularis (Pseudomonas vesicularis).